The chain runs to 414 residues: Dihydroorotase (414 aa).

Positions 56 and 58 each coordinate Zn(2+). Substrate-binding positions include 58–60 (HFR) and Asn-90. Zn(2+) is bound by residues Lys-138, His-171, His-219, and Asp-280. An N6-carboxylysine modification is found at Lys-138. Asp-280 is a catalytic residue. His-284 lines the substrate pocket.

Belongs to the metallo-dependent hydrolases superfamily. DHOase family. Class I DHOase subfamily. Zn(2+) serves as cofactor.

The enzyme catalyses (S)-dihydroorotate + H2O = N-carbamoyl-L-aspartate + H(+). Its pathway is pyrimidine metabolism; UMP biosynthesis via de novo pathway; (S)-dihydroorotate from bicarbonate: step 3/3. In terms of biological role, catalyzes the reversible cyclization of carbamoyl aspartate to dihydroorotate. In Thermoplasma acidophilum (strain ATCC 25905 / DSM 1728 / JCM 9062 / NBRC 15155 / AMRC-C165), this protein is Dihydroorotase.